The primary structure comprises 268 residues: Helix-loop-helix protein 6 (268 aa).

Residues 117–130 are compositionally biased toward low complexity; the sequence is QSQVQPQLPTQSQP. Residues 117–140 form a disordered region; sequence QSQVQPQLPTQSQPKPSSKASLDT. Residues 131 to 140 are compositionally biased toward polar residues; it reads KPSSKASLDT. The bHLH domain maps to 173 to 225; that stretch reads SSVWKRNERERCRVRNVNDGYERLRKHLPVHFDEKRISKVDTLRLAIRYIKHL.

Expressed in the gland cells of the pharynx and weakly in the pharyngeal neuron.

Its subcellular location is the nucleus. Functionally, transcription factor that regulates the development of the g2 pharyngeal gland cells and pharyngeal gland function and thereby is required for feeding. Required for the expression of a number of genes in the pharyngeal gland, possibly by binding to the E box motif (5'-CANNTG-3') in the promoter region of these genes. Positively regulates the expression of genes encoding mucin-like proteins, which lubricate the pharyngeal tract to ensure efficient passage of the bacterial food source. Exhibits pharyngeal gland-specific positive autoregulation activity. The polypeptide is Helix-loop-helix protein 6 (hlh-6) (Caenorhabditis elegans).